A 706-amino-acid polypeptide reads, in one-letter code: F-box/WD repeat-containing protein 7 (706 aa).

The tract at residues 1–157 is disordered; sequence MNQELLSVGS…IVDLPIHQRS (157 aa). At serine 26 the chain carries Phosphoserine. Basic and acidic residues predominate over residues 32 to 54; it reads QMNRVLEEEQQQPRHQEEEHAAR. Positions 69-83 are enriched in polar residues; it reads NDPQQGQLEENNNRF. Over residues 86-128 the composition is skewed to acidic residues; it reads VDEDSSGNQEEQEEDEEHAGEQDEEDEEEEEMDQESDDFDQSD. Basic and acidic residues predominate over residues 129-138; it reads DSSREDEHTH. Threonine 204 carries the phosphothreonine modification. Position 226 is a phosphoserine (serine 226). The 47-residue stretch at 277–323 folds into the F-box domain; that stretch reads RDFISLLPKELALYVLSFLEPKDLLQAAQTCRYWRILAEDNLLWREK. WD repeat units follow at residues 377–417, 419–455, 458–497, 499–535, 538–577, 579–617, and 621–658; these read GHDD…RTLV, HTGGVWSSQMRDNIIISGSTDRTLKVWNAETGECIHT, GHTSTVRCMHLHEKRVVSGSRDATLRVWDIETGQCLHVLM, HVAAVRCVQYDGRRVVSGAYDFMVKVWDPETETCLHT, GHTNRVYSLQFDGIHVVSGSLDTSIRVWDVETGNCIHTLT, HQSLTSGMELKDNILVSGNADSTVKIWDIKTGQCLQTLQ, and KHQSAVTCLQFNKNFVITSSDDGTVKLWDLKTGEFIRN.

In terms of assembly, homodimer; homodimerization plays a role in substrate binding and/or ubiquitination and degradation. Component of the SCF(FBXW7) complex consisting of CUL1, RBX1, SKP1 and FBXW7. Interacts (via F-box domain) with SKP1. Interacts (via F-box domain) with pseudophosphatase STYX; the interaction is direct and prevents FBXW7 interaction with SKP1. Interacts with cyclin-E (CCNE1 or CCNE2). Interacts with PSEN1. Forms a trimeric complex with NOTCH1 and SGK1. Interacts with NOTCH1 intracellular domain/NICD and NOTCH4 intracellular domain/NICD. Interacts with NOTCH2 intracellular domain (N2ICD). Interacts with MYC (when phosphorylated). Interacts with USP28, counteracting ubiquitination of MYC. Interacts with JUN. Found in a complex with JUN and PRR7. Interacts with JUN and PRR7; the interaction inhibits ubiquitination-mediated JUN degradation, promoting its phosphorylation and transcriptional activity. Interacts (when phosphorylated at Thr-204) with PIN1, disrupting FBXW7 dimerization and promoting FBXW7 autoubiquitination and degradation. Interacts with UBE2QL1. Interacts with FAM83D; promotes FBXW7 degradation. Interacts with MYCN; FBXW7 competes with AURKA for binding to unphosphorylated MYCN but not for binding to phosphorylated MYCN. Interacts with STOML1. Interacts with NFE2L1. Interacts with USP36, counteracting ubiquitination of MYC. Interacts with RICTOR; mediates RICTOR ubiquitination and degradation.l Interacts with USP38, counteracting ubiquitination of MYC. As to quaternary structure, (Microbial infection) In case of infection, interacts with T.annulata PIN1 (TaPIN1); leading to FBXW7 autoubiquitination and subsequent degradation: FBXW7 degradation promotes stabilization of JUN, which promotes cell transformation. Phosphorylation at Thr-204 promotes interaction with PIN1, leading to disrupt FBXW7 dimerization and promoting FBXW7 autoubiquitination and degradation. Phosphorylated by ATM at Ser-26 in response to DNA damage, promoting recruitment to DNA damage sites and 'Lys-63'-linked ubiquitination of phosphorylated XRCC4. Post-translationally, ubiquitinated: autoubiquitinates following phosphorylation at Thr-204 and subsequent interaction with PIN1. Ubiquitination leads to its degradation.

It localises to the nucleus. The protein resides in the nucleoplasm. Its subcellular location is the chromosome. It functions in the pathway protein modification; protein ubiquitination. In terms of biological role, substrate recognition component of a SCF (SKP1-CUL1-F-box protein) E3 ubiquitin-protein ligase complex which mediates the ubiquitination and subsequent proteasomal degradation of target proteins. Recognizes and binds phosphorylated sites/phosphodegrons within target proteins and thereafter brings them to the SCF complex for ubiquitination. Identified substrates include cyclin-E (CCNE1 or CCNE2), DISC1, JUN, MYC, NOTCH1 released notch intracellular domain (NICD), NOTCH2, MCL1, MLST8, RICTOR, and probably PSEN1. Acts as a negative regulator of JNK signaling by binding to phosphorylated JUN and promoting its ubiquitination and subsequent degradation. SCF(FBXW7) complex mediates the ubiquitination and subsequent degradation of NFE2L1. Involved in bone homeostasis and negative regulation of osteoclast differentiation. Also able to promote 'Lys-63'-linked ubiquitination in response to DNA damage. The SCF(FBXW7) complex facilitates double-strand break repair following phosphorylation by ATM: phosphorylation promotes localization to sites of double-strand breaks and 'Lys-63'-linked ubiquitination of phosphorylated XRCC4, enhancing DNA non-homologous end joining. The polypeptide is F-box/WD repeat-containing protein 7 (Bos taurus (Bovine)).